The following is a 115-amino-acid chain: NADH-ubiquinone oxidoreductase chain 3 (115 aa).

Helical transmembrane passes span 3 to 23 (LLLTLLTNTTLALLLVFIAFW), 55 to 75 (FFLVAITFLLFDLEIALLLPL), and 84 to 104 (LNTMLTMALFLISLLAASLAY).

It belongs to the complex I subunit 3 family. In terms of assembly, core subunit of respiratory chain NADH dehydrogenase (Complex I) which is composed of 45 different subunits. Interacts with TMEM186. Interacts with TMEM242.

The protein localises to the mitochondrion inner membrane. The enzyme catalyses a ubiquinone + NADH + 5 H(+)(in) = a ubiquinol + NAD(+) + 4 H(+)(out). Core subunit of the mitochondrial membrane respiratory chain NADH dehydrogenase (Complex I) which catalyzes electron transfer from NADH through the respiratory chain, using ubiquinone as an electron acceptor. Essential for the catalytic activity of complex I. In Balaenoptera musculus (Blue whale), this protein is NADH-ubiquinone oxidoreductase chain 3.